We begin with the raw amino-acid sequence, 1240 residues long: Protein MMS22-like (1240 aa).

The segment covering 1–11 has biased composition (polar residues); it reads MESEFSQSLTP. The tract at residues 1–26 is disordered; that stretch reads MESEFSQSLTPPVSPSALNHYGESAP.

The protein belongs to the MMS22 family. MMS22L subfamily. As to quaternary structure, component of the MMS22L-TONSL complex.

It localises to the nucleus. Its subcellular location is the chromosome. Component of the MMS22L-TONSL complex, a complex that promotes homologous recombination-mediated repair of double-strand breaks (DSBs) at stalled or collapsed replication forks. The MMS22L-TONSL complex is required to maintain genome integrity during DNA replication. It mediates the assembly of RAD51 filaments on single-stranded DNA (ssDNA): the MMS22L-TONSL complex is recruited to DSBs following histone replacement by histone chaperones and eviction of the replication protein A complex (RPA/RP-A) from DSBs. Following recruitment to DSBs, the TONSL-MMS22L complex promotes recruitment of RAD51 filaments and subsequent homologous recombination. Within the complex, MMS22L acts by binding ssDNA. The chain is Protein MMS22-like (mms22l) from Danio rerio (Zebrafish).